A 307-amino-acid polypeptide reads, in one-letter code: RHOMBOID-like protein 6, mitochondrial (307 aa).

Residues 1-62 (MRSRDMERGR…DCVAKLLRRF (62 aa)) constitute a mitochondrion transit peptide. 6 helical membrane-spanning segments follow: residues 105-125 (WLHAGIIHLVMNMFDVIIFGI), 136-156 (IGLIYLISGFGGSILSALFLQ), 159-179 (ISVGASGALLGLMGAMLSELL), 191-211 (ALLSFLFIIAINLAIGLLPWV), 214-234 (FAHIGGLLTGFCLGFILLMQP), and 262-282 (LFFVAAVLVVAGLTVGLVMLF). The Nucleophile role is filled by S164. The active-site Charge relay system is the H216.

The protein belongs to the peptidase S54 family.

The protein resides in the mitochondrion membrane. The catalysed reaction is Cleaves type-1 transmembrane domains using a catalytic dyad composed of serine and histidine that are contributed by different transmembrane domains.. In terms of biological role, probable rhomboid-type serine protease that catalyzes intramembrane proteolysis. Might be involved in response to abiotic stimuli. This is RHOMBOID-like protein 6, mitochondrial from Arabidopsis thaliana (Mouse-ear cress).